A 348-amino-acid polypeptide reads, in one-letter code: MIRISLDLMGGDFGPQVVIPGAAKALDRHPDISFVFYGLKEQCDPFLAKFPKLKEKSVFHDCELAVSMEEKPSQALRRGRYVSTMWRSIEAVKTGDADVAVSAGNTGALMAMAKFCLRTMANIERPAIAAIWPTLKGESIVLDVGATIGADAQQLMDFALMGGAMARALFEIERPTIGLLNVGVEEVKGQEEVKEAGRLLREANIDSLEYSGFVEGNDLGKGTVDVVVTEGFSGNIALKTAEGTAKQIAEYLRAAMSRTLLARIGYLFAKSAFDMLREKLDPSKVNGGVFLGLNGIVIKSHGGANAEGIAAAIEVGYDMAKNGLNQKIENDLKKYHAKRLPPIGPEAA.

The protein belongs to the PlsX family. As to quaternary structure, homodimer. Probably interacts with PlsY.

Its subcellular location is the cytoplasm. The catalysed reaction is a fatty acyl-[ACP] + phosphate = an acyl phosphate + holo-[ACP]. The protein operates within lipid metabolism; phospholipid metabolism. In terms of biological role, catalyzes the reversible formation of acyl-phosphate (acyl-PO(4)) from acyl-[acyl-carrier-protein] (acyl-ACP). This enzyme utilizes acyl-ACP as fatty acyl donor, but not acyl-CoA. This Rhizobium etli (strain ATCC 51251 / DSM 11541 / JCM 21823 / NBRC 15573 / CFN 42) protein is Phosphate acyltransferase.